We begin with the raw amino-acid sequence, 257 residues long: Imidazole glycerol phosphate synthase subunit HisF (257 aa).

Catalysis depends on residues Asp-11 and Asp-130.

Belongs to the HisA/HisF family. In terms of assembly, heterodimer of HisH and HisF.

It is found in the cytoplasm. It catalyses the reaction 5-[(5-phospho-1-deoxy-D-ribulos-1-ylimino)methylamino]-1-(5-phospho-beta-D-ribosyl)imidazole-4-carboxamide + L-glutamine = D-erythro-1-(imidazol-4-yl)glycerol 3-phosphate + 5-amino-1-(5-phospho-beta-D-ribosyl)imidazole-4-carboxamide + L-glutamate + H(+). The protein operates within amino-acid biosynthesis; L-histidine biosynthesis; L-histidine from 5-phospho-alpha-D-ribose 1-diphosphate: step 5/9. IGPS catalyzes the conversion of PRFAR and glutamine to IGP, AICAR and glutamate. The HisF subunit catalyzes the cyclization activity that produces IGP and AICAR from PRFAR using the ammonia provided by the HisH subunit. This chain is Imidazole glycerol phosphate synthase subunit HisF, found in Aeromonas salmonicida (strain A449).